The chain runs to 204 residues: Gellan lyase (204 aa).

As to quaternary structure, multimer.

The protein localises to the secreted. The enzyme catalyses Eliminative cleavage of beta-D-glucopyranosyl-(1-&gt;4)-beta-D-glucopyranosyluronate bonds of gellan backbone releasing tetrasaccharides containing a 4-deoxy-4,5-unsaturated D-glucopyranosyluronic acid at the non-reducing end. The tetrasaccharide produced from deacetylated gellan is beta-D-4-deoxy-Delta(4)-GlcAp-(1-&gt;4)-beta-D-Glcp-(1-&gt;4)-alpha-L-Rhap-(1-&gt;3)-beta-D-Glcp.. Its activity is regulated as follows. Activity is stimulated by zinc, potassium, lithium, cobalt, sodium, calcium, iron, manganase, magnesium and mercury ions at a concentration of 1 mM, but inhibited by copper ions at a concentration of 1 mM. Activity is inhibited by potassium, sodium and magnesium ions at a concentration of 1 M. Activity is inhibited by urea, EDTA, dithiothreitol, p-CMB, PSF, natrium lauryl sulfate and N-bromosuccinimide. In terms of biological role, cleaves the glycosidic bonds of gellan backbone and releases tetrasaccharide units of glucuronyl-glucosyl-rhamnosyl-glucose with unsaturated glucuronic acid at the non-reducing terminal. The enzyme is highly specific to the heteropolysaccharide gellan. This chain is Gellan lyase, found in Geobacillus stearothermophilus (Bacillus stearothermophilus).